A 498-amino-acid polypeptide reads, in one-letter code: Glycerol kinase (498 aa).

T12 is an ADP binding site. 3 residues coordinate ATP: T12, T13, and S14. T12 provides a ligand contact to sn-glycerol 3-phosphate. R16 serves as a coordination point for ADP. Residues R82, E83, Y134, and D241 each coordinate sn-glycerol 3-phosphate. Residues R82, E83, Y134, D241, and Q242 each contribute to the glycerol site. The ADP site is built by T263 and G310. ATP contacts are provided by T263, G310, Q314, and G411. ADP contacts are provided by G411 and N415.

Belongs to the FGGY kinase family.

The catalysed reaction is glycerol + ATP = sn-glycerol 3-phosphate + ADP + H(+). The protein operates within polyol metabolism; glycerol degradation via glycerol kinase pathway; sn-glycerol 3-phosphate from glycerol: step 1/1. With respect to regulation, inhibited by fructose 1,6-bisphosphate (FBP). In terms of biological role, key enzyme in the regulation of glycerol uptake and metabolism. Catalyzes the phosphorylation of glycerol to yield sn-glycerol 3-phosphate. The protein is Glycerol kinase of Janthinobacterium sp. (strain Marseille) (Minibacterium massiliensis).